We begin with the raw amino-acid sequence, 316 residues long: N-acetyl-gamma-glutamyl-phosphate reductase (316 aa).

Cys136 is an active-site residue.

Belongs to the NAGSA dehydrogenase family. Type 1 subfamily.

Its subcellular location is the cytoplasm. The enzyme catalyses N-acetyl-L-glutamate 5-semialdehyde + phosphate + NADP(+) = N-acetyl-L-glutamyl 5-phosphate + NADPH + H(+). It functions in the pathway amino-acid biosynthesis; L-arginine biosynthesis; N(2)-acetyl-L-ornithine from L-glutamate: step 3/4. Functionally, catalyzes the NADPH-dependent reduction of N-acetyl-5-glutamyl phosphate to yield N-acetyl-L-glutamate 5-semialdehyde. The protein is N-acetyl-gamma-glutamyl-phosphate reductase of Xanthomonas axonopodis pv. citri (strain 306).